The primary structure comprises 1393 residues: DNA-directed RNA polymerase subunit beta' (1393 aa).

Zn(2+)-binding residues include Cys72, Cys74, Cys87, and Cys90. Positions 463, 465, and 467 each coordinate Mg(2+). Zn(2+)-binding residues include Cys812, Cys887, Cys894, and Cys897.

The protein belongs to the RNA polymerase beta' chain family. In terms of assembly, the RNAP catalytic core consists of 2 alpha, 1 beta, 1 beta' and 1 omega subunit. When a sigma factor is associated with the core the holoenzyme is formed, which can initiate transcription. Mg(2+) is required as a cofactor. Requires Zn(2+) as cofactor.

It catalyses the reaction RNA(n) + a ribonucleoside 5'-triphosphate = RNA(n+1) + diphosphate. Its function is as follows. DNA-dependent RNA polymerase catalyzes the transcription of DNA into RNA using the four ribonucleoside triphosphates as substrates. The chain is DNA-directed RNA polymerase subunit beta' from Chlamydia abortus (strain DSM 27085 / S26/3) (Chlamydophila abortus).